Reading from the N-terminus, the 289-residue chain is Acetyl-coenzyme A carboxylase carboxyl transferase subunit beta 2 (289 aa).

Residues 25-289 enclose the CoA carboxyltransferase N-terminal domain; it reads VWTKCPSCEQ…TNKSIQPEAE (265 aa). C29, C32, C48, and C51 together coordinate Zn(2+). The C4-type zinc-finger motif lies at 29–51; that stretch reads CPSCEQVLYRIALKENLEVCPKC.

This sequence belongs to the AccD/PCCB family. Acetyl-CoA carboxylase is a heterohexamer composed of biotin carboxyl carrier protein (AccB), biotin carboxylase (AccC) and two subunits each of ACCase subunit alpha (AccA) and ACCase subunit beta (AccD). Requires Zn(2+) as cofactor.

It is found in the cytoplasm. It catalyses the reaction N(6)-carboxybiotinyl-L-lysyl-[protein] + acetyl-CoA = N(6)-biotinyl-L-lysyl-[protein] + malonyl-CoA. It functions in the pathway lipid metabolism; malonyl-CoA biosynthesis; malonyl-CoA from acetyl-CoA: step 1/1. Component of the acetyl coenzyme A carboxylase (ACC) complex. Biotin carboxylase (BC) catalyzes the carboxylation of biotin on its carrier protein (BCCP) and then the CO(2) group is transferred by the transcarboxylase to acetyl-CoA to form malonyl-CoA. The polypeptide is Acetyl-coenzyme A carboxylase carboxyl transferase subunit beta 2 (Vibrio campbellii (strain ATCC BAA-1116)).